The chain runs to 130 residues: Large ribosomal subunit protein bL12 (130 aa).

The protein belongs to the bacterial ribosomal protein bL12 family. Homodimer. Part of the ribosomal stalk of the 50S ribosomal subunit. Forms a multimeric L10(L12)X complex, where L10 forms an elongated spine to which 2 to 4 L12 dimers bind in a sequential fashion. Binds GTP-bound translation factors.

Forms part of the ribosomal stalk which helps the ribosome interact with GTP-bound translation factors. Is thus essential for accurate translation. The protein is Large ribosomal subunit protein bL12 of Mycobacterium bovis (strain ATCC BAA-935 / AF2122/97).